Reading from the N-terminus, the 549-residue chain is mRNA-capping enzyme subunit beta (549 aa).

Ser2 is subject to N-acetylserine. Ser15 is modified (phosphoserine). A disordered region spans residues 30–169 (LQKLSEAANG…QGNEGNIASN (140 aa)). A compositionally biased stretch (acidic residues) spans 86-96 (DDEETDTDDEM). Phosphoserine is present on Ser124. Positions 135–157 (AKLEKPSDDSIHQNSKSDEEQRI) are enriched in basic and acidic residues. The active-site N6-GMP-lysine intermediate is the Lys223.

Belongs to the fungal TPase family. As to quaternary structure, heterodimer. The mRNA-capping enzyme is composed of two separate chains alpha and beta, respectively a mRNA guanylyltransferase and an mRNA 5'-triphosphate monophosphatase. Requires Mg(2+) as cofactor.

It localises to the nucleus. It carries out the reaction a 5'-end triphospho-ribonucleoside in mRNA + H2O = a 5'-end diphospho-ribonucleoside in mRNA + phosphate + H(+). In terms of biological role, first step of mRNA capping. Converts the 5'-triphosphate end of a nascent mRNA chain into a diphosphate end. The polypeptide is mRNA-capping enzyme subunit beta (CET1) (Saccharomyces cerevisiae (strain ATCC 204508 / S288c) (Baker's yeast)).